Here is an 80-residue protein sequence, read N- to C-terminus: Putative ATP-dependent Clp protease proteolytic subunit (80 aa).

The active site involves His-19.

This sequence belongs to the peptidase S14 family. In terms of assembly, component of the chloroplastic Clp protease core complex.

It is found in the plastid. The protein resides in the chloroplast. It catalyses the reaction Hydrolysis of proteins to small peptides in the presence of ATP and magnesium. alpha-casein is the usual test substrate. In the absence of ATP, only oligopeptides shorter than five residues are hydrolyzed (such as succinyl-Leu-Tyr-|-NHMec, and Leu-Tyr-Leu-|-Tyr-Trp, in which cleavage of the -Tyr-|-Leu- and -Tyr-|-Trp bonds also occurs).. Cleaves peptides in various proteins in a process that requires ATP hydrolysis. Has a chymotrypsin-like activity. Plays a major role in the degradation of misfolded proteins. This is Putative ATP-dependent Clp protease proteolytic subunit from Pinus strobus (Eastern white pine).